Consider the following 329-residue polypeptide: 4-hydroxythreonine-4-phosphate dehydrogenase (329 aa).

2 residues coordinate substrate: H136 and T137. 3 residues coordinate a divalent metal cation: H166, H211, and H266. Substrate-binding residues include K274, N283, and R292.

Belongs to the PdxA family. Homodimer. Zn(2+) serves as cofactor. The cofactor is Mg(2+). Co(2+) is required as a cofactor.

Its subcellular location is the cytoplasm. The enzyme catalyses 4-(phosphooxy)-L-threonine + NAD(+) = 3-amino-2-oxopropyl phosphate + CO2 + NADH. It participates in cofactor biosynthesis; pyridoxine 5'-phosphate biosynthesis; pyridoxine 5'-phosphate from D-erythrose 4-phosphate: step 4/5. In terms of biological role, catalyzes the NAD(P)-dependent oxidation of 4-(phosphooxy)-L-threonine (HTP) into 2-amino-3-oxo-4-(phosphooxy)butyric acid which spontaneously decarboxylates to form 3-amino-2-oxopropyl phosphate (AHAP). The polypeptide is 4-hydroxythreonine-4-phosphate dehydrogenase (Citrobacter koseri (strain ATCC BAA-895 / CDC 4225-83 / SGSC4696)).